A 442-amino-acid polypeptide reads, in one-letter code: UDP-glycosyltransferase 78D4 (442 aa).

Residues 322–324, 339–347, and 361–364 each bind UDP-alpha-D-glucose; these read APQ, HGGWNSVLE, and FGDH.

It belongs to the UDP-glycosyltransferase family.

This chain is UDP-glycosyltransferase 78D4 (UGT78D4), found in Arabidopsis thaliana (Mouse-ear cress).